A 388-amino-acid chain; its full sequence is Putative N(4)-(beta-N-acetylglucosaminyl)-L-asparaginase GL17147 (388 aa).

The N-terminal stretch at 1–20 is a signal peptide; it reads MYKAQYLWLFGLVLISRSAT. Disulfide bonds link Cys-94-Cys-99 and Cys-193-Cys-209. Thr-240 acts as the Nucleophile in catalysis. Substrate is bound by residues 268 to 271 and 291 to 294; these read RVGD and TGDG. A disulfide bridge links Cys-351 with Cys-378.

It belongs to the Ntn-hydrolase family. Heterotetramer of two alpha and two beta chains arranged as a dimer of alpha/beta heterodimers. Post-translationally, cleaved into an alpha and beta chain by autocatalysis; this activates the enzyme. The N-terminal residue of the beta subunit is responsible for the nucleophile hydrolase activity.

The enzyme catalyses N(4)-(beta-N-acetyl-D-glucosaminyl)-L-asparagine + H2O = N-acetyl-beta-D-glucosaminylamine + L-aspartate + H(+). Cleaves the GlcNAc-Asn bond which joins oligosaccharides to the peptide of asparagine-linked glycoproteins. In Drosophila persimilis (Fruit fly), this protein is Putative N(4)-(beta-N-acetylglucosaminyl)-L-asparaginase GL17147.